The following is a 752-amino-acid chain: Polyribonucleotide nucleotidyltransferase (752 aa).

Mg(2+) contacts are provided by aspartate 529 and aspartate 535. Residues 595-654 (PRVTTIKVPVDKIGEVIGPKGKVINAITEETGAQISIEDDGTVFVGATDGPSAQAAIDKI) enclose the KH domain. Positions 666–735 (GERFLGTVVK…KRGKISLILV (70 aa)) constitute an S1 motif domain.

The protein belongs to the polyribonucleotide nucleotidyltransferase family. Mg(2+) serves as cofactor.

The protein localises to the cytoplasm. It catalyses the reaction RNA(n+1) + phosphate = RNA(n) + a ribonucleoside 5'-diphosphate. In terms of biological role, involved in mRNA degradation. Catalyzes the phosphorolysis of single-stranded polyribonucleotides processively in the 3'- to 5'-direction. This Mycobacterium tuberculosis (strain ATCC 25177 / H37Ra) protein is Polyribonucleotide nucleotidyltransferase.